The chain runs to 331 residues: CRISPR-associated endonuclease Cas1 (331 aa).

Residues Glu-155, His-221, and Glu-236 each contribute to the Mn(2+) site.

It belongs to the CRISPR-associated endonuclease Cas1 family. Homodimer, forms a heterotetramer with a Cas2 homodimer. It depends on Mg(2+) as a cofactor. The cofactor is Mn(2+).

CRISPR (clustered regularly interspaced short palindromic repeat), is an adaptive immune system that provides protection against mobile genetic elements (viruses, transposable elements and conjugative plasmids). CRISPR clusters contain spacers, sequences complementary to antecedent mobile elements, and target invading nucleic acids. CRISPR clusters are transcribed and processed into CRISPR RNA (crRNA). Acts as a dsDNA endonuclease. Involved in the integration of spacer DNA into the CRISPR cassette. The protein is CRISPR-associated endonuclease Cas1 of Methanopyrus kandleri (strain AV19 / DSM 6324 / JCM 9639 / NBRC 100938).